The following is a 278-amino-acid chain: Large ribosomal subunit protein uL2 (278 aa).

The interval 226–278 (MNPIDHPHGGGEGKTAAGRHPVSPWGTPSKGSRTRKNKRTSNMIVRSRYSKKG) is disordered.

This sequence belongs to the universal ribosomal protein uL2 family. As to quaternary structure, part of the 50S ribosomal subunit. Forms a bridge to the 30S subunit in the 70S ribosome.

One of the primary rRNA binding proteins. Required for association of the 30S and 50S subunits to form the 70S ribosome, for tRNA binding and peptide bond formation. It has been suggested to have peptidyltransferase activity; this is somewhat controversial. Makes several contacts with the 16S rRNA in the 70S ribosome. The sequence is that of Large ribosomal subunit protein uL2 from Nitrosomonas europaea (strain ATCC 19718 / CIP 103999 / KCTC 2705 / NBRC 14298).